The sequence spans 742 residues: Two-component response regulator-like PRR37 (742 aa).

The Response regulatory domain occupies 63 to 181; the sequence is KVLLVDSDDS…ELKNLWQHVW (119 aa). The segment covering 186 to 195 has biased composition (low complexity); sequence SSSGSGSESG. 7 disordered regions span residues 186–249, 290–346, 377–402, 478–517, 533–568, 590–671, and 697–742; these read SSSG…SWTK, PCTS…PLQN, QQAA…NRDN, MKSN…NKER, FHPA…GEVQ, NGGS…GNDM, and NFGK…AADR. Residues 236–248 show a composition bias toward polar residues; that stretch reads DNGSGTQAQSSWT. The segment covering 299-313 has biased composition (basic and acidic residues); the sequence is KQKETNDDFKGKDLE. Over residues 318-330 the composition is skewed to polar residues; the sequence is RNLNTAYQSSPNE. Basic and acidic residues predominate over residues 331 to 341; the sequence is RSIKPTDRRNE. Residues 490–502 are compositionally biased toward low complexity; the sequence is GSNGSSNNNDMGS. The segment covering 503–512 has biased composition (polar residues); that stretch reads TTKNVVTKPS. Residues 618–634 are compositionally biased toward low complexity; it reads NGSNSGSNNGSNGQNGS. The span at 656–667 shows a compositional bias: gly residues; the sequence is GPGGGNGSGSGS. The CCT domain maps to 682–724; that stretch reads RVAAVIKFRQKRKERNFGKKVRYQSRKRLAEQRPRVRGQFVRQ. Residues 697-708 are compositionally biased toward basic residues; it reads NFGKKVRYQSRK. Low complexity predominate over residues 719-731; sequence GQFVRQAVQDQQQ.

The protein belongs to the ARR-like family.

Its subcellular location is the nucleus. Probable transcription factor involved in the regulation of flowering time under long day (LD) conditions. Functions as a repressor of flowering. Controls flowering time by negatively regulating the expression of HD3A. Acts downstream of the phytochrome B to repress the expression of EHD1, an activator of the flowering promoter genes HD3A and RFT1. Controls photoperiodic flowering response. Seems to be one of the component of the circadian clock. Expression of several members of the ARR-like family is controlled by circadian rhythm. The particular coordinated sequential expression of PRR73, PRR37, PRR95, PRR59 and PPR1 result to circadian waves that may be at the basis of the endogenous circadian clock. This Oryza sativa subsp. japonica (Rice) protein is Two-component response regulator-like PRR37.